The primary structure comprises 446 residues: MEAEAADAPPGGVESALSCFSFNQDCTSLATGTKAGYKLFSLSSVEQLDQVHGSNEIPDVYIVERLFSSSLVVVVSHTKPRQMNVYHFKKGTEICNYSYSSNILSIRLNRQRLLVCLEESIYIHNIKDMKLLKTLLDIPANPTGLCALSINHSNSYLAYPGSLTSGEIVLYDGNSLKTVCTIAAHEGTLAAITFNASGSKLASASEKGTVIRVFSVPDGQKLYEFRRGMKRYVTISSLVFSMDSQFLCASSNTETVHIFKLEQVTNSRPEEPSTWSGYMGKMFMAATNYLPTQVSDMMHQDRAFATARLNFSGQRNICTLSTIQKLPRLLVASSSGHLYMYNLDPQDGGECVLIKTHSLLGSGTTEENKENDLRPSLPQSYAATVARPSASSASTVPGYSEDGGALRGEVIPEHEFATGPVCLDDENEFPPIILCRGNQKGKTKQS.

7 WD repeats span residues 3–42 (AEAA…LFSL), 47–88 (QLDQ…VYHF), 92–126 (TEIC…IHNI), 131–173 (LLKT…LYDG), 177–216 (KTVC…VFSV), 222–261 (LYEF…IFKL), and 304–343 (FATA…MYNL). Positions 131-136 (LLKTLL) match the Nuclear receptor interaction motif. Positions 225-228 (FRRG) match the L/FRRG motif motif. Positions 386–406 (ARPSASSASTVPGYSEDGGAL) are disordered.

This sequence belongs to the WD repeat PROPPIN family. In terms of assembly, interacts with androgen receptor (AR) and the estrogen receptors ESR1 and ESR2. Interacts with WIPI2. Interacts with WDR45. Interacts with ATG16L1. May interact with NUDC. As to expression, ubiquitously expressed. Highly expressed in skeletal muscle, heart, testis, pancreas and placenta. Highly expressed in G361, Sk-mel-28, Sk-mel-13, WM852 and WM451 cells. Up-regulated in a variety of tumor tissues.

Its subcellular location is the golgi apparatus. It localises to the trans-Golgi network. It is found in the endosome. The protein resides in the cytoplasmic vesicle. The protein localises to the clathrin-coated vesicle. Its subcellular location is the preautophagosomal structure membrane. It localises to the cytoplasm. It is found in the cytoskeleton. In terms of biological role, component of the autophagy machinery that controls the major intracellular degradation process by which cytoplasmic materials are packaged into autophagosomes and delivered to lysosomes for degradation. Plays an important role in starvation- and calcium-mediated autophagy, as well as in mitophagy. Functions downstream of the ULK1 and PI3-kinases that produce phosphatidylinositol 3-phosphate (PtdIns3P) on membranes of the endoplasmic reticulum once activated. Binds phosphatidylinositol 3-phosphate (PtdIns3P), and maybe other phosphoinositides including PtdIns3,5P2 and PtdIns5P, and is recruited to phagophore assembly sites at the endoplasmic reticulum membranes. There, it assists WIPI2 in the recruitment of ATG12-ATG5-ATG16L1, a complex that directly controls the elongation of the nascent autophagosomal membrane. Together with WDR45/WIPI4, promotes ATG2 (ATG2A or ATG2B)-mediated lipid transfer by enhancing ATG2-association with phosphatidylinositol 3-monophosphate (PI3P)-containing membranes. Involved in xenophagy of Staphylococcus aureus. Invading S.aureus cells become entrapped in autophagosome-like WIPI1 positive vesicles targeted for lysosomal degradation. Also plays a distinct role in controlling the transcription of melanogenic enzymes and melanosome maturation, a process that is distinct from starvation-induced autophagy. May also regulate the trafficking of proteins involved in the mannose-6-phosphate receptor (MPR) recycling pathway. This chain is WD repeat domain phosphoinositide-interacting protein 1 (WIPI1), found in Homo sapiens (Human).